A 205-amino-acid chain; its full sequence is Probable thymidylate kinase (205 aa).

ATP is bound at residue 9 to 16 (GIDGVGKS).

This sequence belongs to the thymidylate kinase family.

The enzyme catalyses dTMP + ATP = dTDP + ADP. This is Probable thymidylate kinase from Caldivirga maquilingensis (strain ATCC 700844 / DSM 13496 / JCM 10307 / IC-167).